The following is a 653-amino-acid chain: Chaperone protein DnaK (653 aa).

A Phosphothreonine; by autocatalysis modification is found at Thr200. The tract at residues 615–653 (AEAAAAGAAGAGGAGASAGGASQQQDDVVDAEFKEVKKD) is disordered. Residues 623 to 632 (AGAGGAGASA) are compositionally biased toward gly residues.

It belongs to the heat shock protein 70 family.

Its function is as follows. Acts as a chaperone. This is Chaperone protein DnaK from Paraburkholderia xenovorans (strain LB400).